The sequence spans 238 residues: Chromosome partition protein MukE (238 aa).

The interval 206–238 is disordered; sequence EESSQSSFDLDENEKLSDISAEEQHELELEGDA. Residues 218-238 show a composition bias toward basic and acidic residues; it reads NEKLSDISAEEQHELELEGDA.

The protein belongs to the MukE family. Interacts, and probably forms a ternary complex, with MukF and MukB. The complex formation is stimulated by calcium or magnesium.

It is found in the cytoplasm. It localises to the nucleoid. In terms of biological role, involved in chromosome condensation, segregation and cell cycle progression. May participate in facilitating chromosome segregation by condensation DNA from both sides of a centrally located replisome during cell division. Probably acts via its interaction with MukB and MukF. This chain is Chromosome partition protein MukE, found in Aliivibrio salmonicida (strain LFI1238) (Vibrio salmonicida (strain LFI1238)).